The following is a 115-amino-acid chain: Nucleoid-associated protein LBL_0065 (115 aa).

It belongs to the YbaB/EbfC family. As to quaternary structure, homodimer.

It localises to the cytoplasm. It is found in the nucleoid. Its function is as follows. Binds to DNA and alters its conformation. May be involved in regulation of gene expression, nucleoid organization and DNA protection. The polypeptide is Nucleoid-associated protein LBL_0065 (Leptospira borgpetersenii serovar Hardjo-bovis (strain L550)).